The following is a 54-amino-acid chain: Phorbol-12-myristate-13-acetate-induced protein 1 (54 aa).

The BH3 motif lies at 29 to 37 (LRRFGDKLN). The required for mitochondrial location stretch occupies residues 41-50 (KLLNLISKLF).

The protein belongs to the PMAIP1 family. As to quaternary structure, interacts with MCL1. Interacts with BCL2A1. Interacts with BAX. Interacts with BCL2L10. Highly expressed in adult T-cell leukemia cell line.

The protein resides in the mitochondrion. Its function is as follows. Promotes activation of caspases and apoptosis. Promotes mitochondrial membrane changes and efflux of apoptogenic proteins from the mitochondria. Contributes to p53/TP53-dependent apoptosis after radiation exposure. Promotes proteasomal degradation of MCL1. Competes with BAK1 for binding to MCL1 and can displace BAK1 from its binding site on MCL1. Competes with BIM/BCL2L11 for binding to MCL1 and can displace BIM/BCL2L11 from its binding site on MCL1. This is Phorbol-12-myristate-13-acetate-induced protein 1 (PMAIP1) from Homo sapiens (Human).